A 263-amino-acid polypeptide reads, in one-letter code: Orotidine 5'-phosphate decarboxylase (263 aa).

Residues Asp36, 58 to 60 (KTH), 90 to 99 (DRKFADIGNT), Tyr216, and Arg234 each bind substrate. The Proton donor role is filled by Lys92.

This sequence belongs to the OMP decarboxylase family.

The enzyme catalyses orotidine 5'-phosphate + H(+) = UMP + CO2. It participates in pyrimidine metabolism; UMP biosynthesis via de novo pathway; UMP from orotate: step 2/2. The polypeptide is Orotidine 5'-phosphate decarboxylase (URA3) (Komagataella pastoris (Yeast)).